A 452-amino-acid chain; its full sequence is Phosphoglucosamine mutase (452 aa).

The active-site Phosphoserine intermediate is serine 101. 4 residues coordinate Mg(2+): serine 101, aspartate 241, aspartate 243, and aspartate 245. Serine 101 is subject to Phosphoserine.

This sequence belongs to the phosphohexose mutase family. Mg(2+) is required as a cofactor. In terms of processing, activated by phosphorylation.

It catalyses the reaction alpha-D-glucosamine 1-phosphate = D-glucosamine 6-phosphate. In terms of biological role, catalyzes the conversion of glucosamine-6-phosphate to glucosamine-1-phosphate. This Lactococcus lactis subsp. cremoris (strain MG1363) protein is Phosphoglucosamine mutase.